The chain runs to 583 residues: Ribonuclease ZC3H12A (583 aa).

Residues 1–11 (MSLWELEDRRS) show a composition bias toward basic and acidic residues. Disordered stretches follow at residues 1–29 (MSLW…EATT) and 73–119 (GSAA…GSDL). Residues 15–29 (TPRPAQEPTAEEATT) are compositionally biased toward low complexity. The tract at residues 26-71 (EATTAELQMKVDFFRKLGYSSAEIHSVLQKLGIQADTNTVLGELVK) is ubiquitin association domain. The interval 65–134 (VLGELVKHGS…DGSNVAMSHG (70 aa)) is necessary for interaction with TANK. Basic and acidic residues predominate over residues 73–82 (GSAAERERQA). Serine 83 carries the post-translational modification Phosphoserine. The interval 96-281 (GGGTPKAPTV…LDNFLRKKPL (186 aa)) is RNase. The RNase NYN domain maps to 119–274 (LRPIVIDGSN…LGRHGPSLDN (156 aa)). An RNA binding region spans residues 198 to 204 (RRVGGKR). Mg(2+) is bound at residue aspartate 210. Disordered regions lie at residues 262-290 (DDPL…KQPC) and 323-404 (ANAL…PSEW). Residues 284 to 309 (EHKKQPCPYGRKCTYGIKCRFLHPER) form a C3H1-type zinc finger. The tract at residues 285–441 (HKKQPCPYGR…SELWGVRGGG (157 aa)) is necessary for interaction with ZC3H12D. Residues 341-352 (RPSPSSQPGSLP) show a composition bias toward low complexity. The segment covering 353-364 (TEHEQCSPDRKK) has biased composition (basic and acidic residues). Low complexity predominate over residues 384-393 (PTGRSLPPSG). Phosphoserine occurs at positions 422 and 426. The segment at 503–530 (YQLPPPTQRLQEPQAPGPGADRGPWGGA) is disordered.

Belongs to the ZC3H12 family. As to quaternary structure, oligomer. Found in a deubiquitination complex with TANK, USP10 and ZC3H12A; this complex inhibits genotoxic stress- or interleukin-1-beta-mediated NF-kappaB activation by promoting IKBKG or TRAF6 deubiquitination. Interacts with IKBKG; this interaction increases in response to DNA damage. Interacts with TANK; this interaction increases in response to DNA damage and serves as a bridge to anchor both TANK and USP10 into a deubiquitinating complex. Interacts with TRAF6; this interaction increases in response to DNA damage and is stimulated by TANK. Interacts with USP10; this interaction increases in response to DNA damage and serves as a bridge to anchor both TANK and USP10 into a deubiquitinating complex. Interacts with ZC3H12D. Interacts with TNRC6A. Interacts with IKBKB/IKKB. Interacts with IKBKB/IKKB. Interacts with BTRC; the interaction occurs when ZC3H12A is phosphorylated in a IKBKB/IKKB-dependent manner. Interacts with IRAK1; this interaction increases the interaction between ZC3H12A and IKBKB/IKKB. Interacts with UPF1; this interaction occurs in a mRNA translationally active- and termination-dependent manner and is essential for ZC3H12A-mediated degradation of target mRNAs. Associates with ribosomes. Interacts with ubiquitin. Mg(2+) serves as cofactor. In terms of processing, phosphorylated by IRAK1; phosphorylation is necessary for subsequent phosphorylation by the I-kappa-B-kinase (IKK) complex. Phosphorylated by I-kappa-B-kinase (IKK) subunits IKBKB/IKKB and CHUK/IKKA at Ser-422 and Ser-426; these phosphorylations promote ubiquitin proteasome-mediated degradation of ZC3H12A and hence facilitates rapid and robust production of IL-6 mRNA in response to toll-like receptor (TLR) or IL-1 receptor stimuli. Post-translationally, ubiquitinated; ubiquitination is induced in response to interleukin IL1 receptor stimuli in a IKBKB/IKKB and IRAK1-dependent manner, leading to proteasome-mediated degradation. Proteolytically cleaved between Arg-95 and Arg-198 by MALT1 in activated T-cells; cleavage at Arg-95 is critical for promoting ZC3H12A degradation in response to T-cell receptor (TCR) stimulation, and hence is necessary for prolonging the stability of a set of mRNAs controlling T-cell activation and Th17 cell differentiation.

The protein resides in the nucleus. Its subcellular location is the cytoplasm. It localises to the P-body. The protein localises to the rough endoplasmic reticulum membrane. It is found in the cytoplasmic granule. Endoribonuclease involved in various biological functions such as cellular inflammatory response and immune homeostasis, glial differentiation of neuroprogenitor cells, cell death of cardiomyocytes, adipogenesis and angiogenesis. Functions as an endoribonuclease involved in mRNA decay. Modulates the inflammatory response by promoting the degradation of a set of translationally active cytokine-induced inflammation-related mRNAs, such as IL6 and IL12B, during the early phase of inflammation. Prevents aberrant T-cell-mediated immune reaction by degradation of multiple mRNAs controlling T-cell activation, such as those encoding cytokines (IL6 and IL2), cell surface receptors (ICOS, TNFRSF4 and TNFR2) and transcription factor (REL). Inhibits cooperatively with ZC3H12A the differentiation of helper T cells Th17 in lungs. They repress target mRNA encoding the Th17 cell-promoting factors IL6, ICOS, REL, IRF4, NFKBID and NFKBIZ. The cooperation requires RNA-binding by RC3H1 and the nuclease activity of ZC3H12A. Together with RC3H1, destabilizes TNFRSF4/OX40 mRNA by binding to the conserved stem loop structure in its 3'UTR. Self regulates by destabilizing its own mRNA. Cleaves mRNA harboring a stem-loop (SL), often located in their 3'-UTRs, during the early phase of inflammation in a helicase UPF1-dependent manner. Plays a role in the inhibition of microRNAs (miRNAs) biogenesis. Cleaves the terminal loop of a set of precursor miRNAs (pre-miRNAs) important for the regulation of the inflammatory response leading to their degradation, and thus preventing the biosynthesis of mature miRNAs. Also plays a role in promoting angiogenesis in response to inflammatory cytokines by inhibiting the production of antiangiogenic microRNAs via its anti-dicer RNase activity. Affects the overall ubiquitination of cellular proteins. Positively regulates deubiquitinase activity promoting the cleavage at 'Lys-48'- and 'Lys-63'-linked polyubiquitin chains on TNF receptor-associated factors (TRAFs), preventing JNK and NF-kappa-B signaling pathway activation, and hence negatively regulating macrophage-mediated inflammatory response and immune homeostasis. Also induces deubiquitination of the transcription factor HIF1A, probably leading to its stabilization and nuclear import, thereby positively regulating the expression of proangiogenic HIF1A-targeted genes. Involved in a TANK-dependent negative feedback response to attenuate NF-kappaB activation through the deubiquitination of IKBKG or TRAF6 in response to interleukin-1-beta (IL1B) stimulation or upon DNA damage. Prevents stress granules (SGs) formation and promotes macrophage apoptosis under stress conditions, including arsenite-induced oxidative stress, heat shock, and energy deprivation. Plays a role in the regulation of macrophage polarization; promotes IL4-induced polarization of macrophages M1 into anti-inflammatory M2 state. May also act as a transcription factor that regulates the expression of multiple genes involved in inflammatory response, angiogenesis, adipogenesis and apoptosis. Functions as a positive regulator of glial differentiation of neuroprogenitor cells through an amyloid precursor protein (APP)-dependent signaling pathway. Attenuates septic myocardial contractile dysfunction in response to lipopolysaccharide (LPS) by reducing I-kappa-B-kinase (IKK)-mediated NF-kappa-B activation, and hence myocardial pro-inflammatory cytokine production. The polypeptide is Ribonuclease ZC3H12A (Bos taurus (Bovine)).